We begin with the raw amino-acid sequence, 340 residues long: HTH-type transcriptional regulator CelR (340 aa).

The HTH lacI-type domain occupies 1-61; sequence MERRRRPTLE…PNRAARTLVT (61 aa). The segment at residues 9–28 is a DNA-binding region (H-T-H motif); sequence LEMVAALAGVGRGTVSRVIN.

Its subcellular location is the cytoplasm. With respect to regulation, activity is controlled by cytoplasmic cellobiose levels. Binding of CelR to the celE promoter is inhibited specifically by low concentrations of cellobiose, the major end product of cellulases. Activity may also be regulated through post-translational modification. Transcriptional regulator that regulates the expression of all six cellulases, encoded by the cel genes (designated celA through celF). Acts as a repressor. Specifically binds to a 14-bp inverted repeat site, which is present in the upstream region of the cellulase genes. The protein is HTH-type transcriptional regulator CelR of Thermobifida fusca (Thermomonospora fusca).